A 288-amino-acid chain; its full sequence is Polyprenyl transferase eriF (288 aa).

6 consecutive transmembrane segments (helical) span residues Ala24–Leu44, Tyr51–Val71, Ile101–Thr121, Cys145–Pro165, Phe215–Phe235, and Phe268–Ile288.

This sequence belongs to the UbiA prenyltransferase family. Mg(2+) is required as a cofactor.

The protein localises to the membrane. In terms of biological role, polyprenyl transferase; part of the gene cluster that mediates the biosynthesis of erinacines, cyathane-xylosides that show unique biological activities, including leishmanicidal activity, stimulating activity for nerve growth-factor synthesis, and agonistic activity toward the kappa opioid receptor. The role of eriF within the pathway has still to be determined. The first step of the erinacines biosynthesis pathway is catalyzed by the geranylgeranyl diphosphate (GGPP) synthase eriE via conversion of farnesyl pyrophosphate and isopentyl pyrophosphate into geranylgeranyl pyrophosphate (GGPP). GGPP is then substrate of the diterpene cyclase eriG for the production of cyatha-3,12-diene. The cytochrome P450 monooxygenase eriI then hydroxylates cyatha-3,12-diene at C-14 of the seven-membered ring to produce erinacol, which is further hydroxylated at C-15 by the cytochrome P450 monooxygenase eriC to yield cyathadiol. The cytochrome P450 monooxygenase eriA then catalyzes C-11 hydroxylation in the presence of the short chain dehydrogenase/reductase (SDR) eriH, which leads to the production of cyathatriol. The acetyltransferase eriL converts cyathatriol into 11-O-acetyl-cyathatriol. The SDR eriH catalyzes further oxidation of 11-O-acetyl-cyathatriol into 1-O-acetylcyathin A3. Finally, the glycosyl transferase eriJ tranfers xylose from UDP-xylose onto C-14 of 11-O-acetyl-cyathatriol to form eracine Q. EriJ is also able to convert 11-O-acetyl-cyathatriol to eracine Q2 by using UDP-D-glucose as cosubstrate, but at a lower rate. The chain is Polyprenyl transferase eriF from Hericium erinaceus (Lion's mane mushroom).